A 248-amino-acid chain; its full sequence is PF03932 family protein CutC (248 aa).

It belongs to the CutC family. As to quaternary structure, homodimer.

The protein resides in the cytoplasm. This is PF03932 family protein CutC from Salmonella schwarzengrund (strain CVM19633).